The chain runs to 621 residues: Chaperone protein HscA homolog (621 aa).

The protein belongs to the heat shock protein 70 family.

Functionally, chaperone involved in the maturation of iron-sulfur cluster-containing proteins. Has a low intrinsic ATPase activity which is markedly stimulated by HscB. This chain is Chaperone protein HscA homolog, found in Cupriavidus metallidurans (strain ATCC 43123 / DSM 2839 / NBRC 102507 / CH34) (Ralstonia metallidurans).